The following is a 476-amino-acid chain: ATP synthase subunit beta (476 aa).

158–165 is an ATP binding site; it reads GGAGVGKT.

Belongs to the ATPase alpha/beta chains family. F-type ATPases have 2 components, CF(1) - the catalytic core - and CF(0) - the membrane proton channel. CF(1) has five subunits: alpha(3), beta(3), gamma(1), delta(1), epsilon(1). CF(0) has three main subunits: a(1), b(2) and c(9-12). The alpha and beta chains form an alternating ring which encloses part of the gamma chain. CF(1) is attached to CF(0) by a central stalk formed by the gamma and epsilon chains, while a peripheral stalk is formed by the delta and b chains.

The protein localises to the cell inner membrane. It carries out the reaction ATP + H2O + 4 H(+)(in) = ADP + phosphate + 5 H(+)(out). Its function is as follows. Produces ATP from ADP in the presence of a proton gradient across the membrane. The catalytic sites are hosted primarily by the beta subunits. This Paracidovorax citrulli (strain AAC00-1) (Acidovorax citrulli) protein is ATP synthase subunit beta.